The primary structure comprises 115 residues: Holo-[acyl-carrier-protein] synthase (115 aa).

Residues Asp-8 and Glu-50 each coordinate Mg(2+).

The protein belongs to the P-Pant transferase superfamily. AcpS family. Mg(2+) is required as a cofactor.

It is found in the cytoplasm. It carries out the reaction apo-[ACP] + CoA = holo-[ACP] + adenosine 3',5'-bisphosphate + H(+). Its function is as follows. Transfers the 4'-phosphopantetheine moiety from coenzyme A to a Ser of acyl-carrier-protein. The chain is Holo-[acyl-carrier-protein] synthase from Cutibacterium acnes (strain DSM 16379 / KPA171202) (Propionibacterium acnes).